Reading from the N-terminus, the 631-residue chain is 1-deoxy-D-xylulose-5-phosphate synthase (631 aa).

Thiamine diphosphate is bound by residues histidine 73 and 114 to 116 (GHS). Residue aspartate 145 coordinates Mg(2+). Thiamine diphosphate contacts are provided by residues 146–147 (GA), asparagine 174, tyrosine 285, and glutamate 366. Asparagine 174 serves as a coordination point for Mg(2+).

The protein belongs to the transketolase family. DXPS subfamily. Homodimer. Mg(2+) is required as a cofactor. Thiamine diphosphate serves as cofactor.

It carries out the reaction D-glyceraldehyde 3-phosphate + pyruvate + H(+) = 1-deoxy-D-xylulose 5-phosphate + CO2. It participates in metabolic intermediate biosynthesis; 1-deoxy-D-xylulose 5-phosphate biosynthesis; 1-deoxy-D-xylulose 5-phosphate from D-glyceraldehyde 3-phosphate and pyruvate: step 1/1. Catalyzes the acyloin condensation reaction between C atoms 2 and 3 of pyruvate and glyceraldehyde 3-phosphate to yield 1-deoxy-D-xylulose-5-phosphate (DXP). In Desulfitobacterium hafniense (strain DSM 10664 / DCB-2), this protein is 1-deoxy-D-xylulose-5-phosphate synthase.